The sequence spans 239 residues: MKFYDLMCKAAQDVGLELSKEQYEKFIIYKNLLQEWNEKVNLTAITEDEDIIKKHFIDSIKAFKRDEFKEAKTLIDVGTGAGFPGIPVAIMNENIQVTLLDSLNKRVNFLNLVTEKLGLKNVVAIHSRAEDGARQKNLRESFDIATSRAVANMSVLSEFCLPYVKINGHFIALKGPAVEEEIKDSDKAITTLGGQLLDICEVEIEDTELKHNLVVVKKIKECPKVYPRKAGNVTKKPIK.

S-adenosyl-L-methionine is bound by residues Gly-78, Phe-83, 129–130, and Arg-148; that span reads AE.

It belongs to the methyltransferase superfamily. RNA methyltransferase RsmG family.

The protein localises to the cytoplasm. Its function is as follows. Specifically methylates the N7 position of a guanine in 16S rRNA. The protein is Ribosomal RNA small subunit methyltransferase G of Clostridium botulinum (strain Alaska E43 / Type E3).